We begin with the raw amino-acid sequence, 336 residues long: Abasic site processing protein HMCES (336 aa).

Cys-2 (nucleophile) is an active-site residue. Cys-2 carries the post-translational modification Thiazolidine linkage to a ring-opened DNA abasic site. Residues 29-38 are compositionally biased toward basic and acidic residues; it reads QPEWLREGRY. The disordered stretch occupies residues 29–52; the sequence is QPEWLREGRYRPSYNKGPQSSGPV. The active site involves Glu-127. The interval 283–336 is disordered; the sequence is LKSSQEGSPQKKEDTLPRWKSQFIHSPSPKKSSAGILRQWLGQEGGPPAKKQKA.

The protein belongs to the SOS response-associated peptidase family.

It is found in the chromosome. Its activity is regulated as follows. Formation and reversal of DNA-protein cross-link depends on DNA context. Catalyzes formation of the thiazolidine linkage in presence of abasic sites in single-stranded DNA. Mediates the reversal of the thiazolidine cross-link in presence of double stranded DNA. Functionally, sensor of abasic sites in single-stranded DNA (ssDNA) required to preserve genome integrity by promoting error-free repair of abasic sites. Acts as an enzyme that recognizes and binds abasic sites in ssDNA at replication forks and chemically modifies the lesion by forming a covalent cross-link with DNA: forms a stable thiazolidine linkage between a ring-opened abasic site and the alpha-amino and sulfhydryl substituents of its N-terminal catalytic cysteine residue. The HMCES DNA-protein cross-link is then either reversed or degraded. HMCES is able to catalyze the reversal of its thiazolidine cross-link and cycle between a cross-link and a non-cross-linked state depending on DNA context: mediates self-reversal of the thiazolidine cross-link in double stranded DNA, allowing APEX1 to initiate downstream repair of abasic sites. The HMCES DNA-protein cross-link can also be degraded by the SPRTN metalloprotease following unfolding by the BRIP1/FANCJ helicase. Promotes error-free repair of abasic sites by protecting abasic sites from translesion synthesis (TLS) polymerases and endonucleases that are error-prone and would generate mutations and double-strand breaks. Acts as a protease: mediates autocatalytic processing of its N-terminal methionine in order to expose the catalytic cysteine. The HMCES DNA-protein cross-link is then either reversed or degraded. According to a model, the HMCES DNA-protein cross-link. The chain is Abasic site processing protein HMCES from Gallus gallus (Chicken).